The following is a 496-amino-acid chain: Aspartyl/glutamyl-tRNA(Asn/Gln) amidotransferase subunit B (496 aa).

Belongs to the GatB/GatE family. GatB subfamily. As to quaternary structure, heterotrimer of A, B and C subunits.

It carries out the reaction L-glutamyl-tRNA(Gln) + L-glutamine + ATP + H2O = L-glutaminyl-tRNA(Gln) + L-glutamate + ADP + phosphate + H(+). The catalysed reaction is L-aspartyl-tRNA(Asn) + L-glutamine + ATP + H2O = L-asparaginyl-tRNA(Asn) + L-glutamate + ADP + phosphate + 2 H(+). Its function is as follows. Allows the formation of correctly charged Asn-tRNA(Asn) or Gln-tRNA(Gln) through the transamidation of misacylated Asp-tRNA(Asn) or Glu-tRNA(Gln) in organisms which lack either or both of asparaginyl-tRNA or glutaminyl-tRNA synthetases. The reaction takes place in the presence of glutamine and ATP through an activated phospho-Asp-tRNA(Asn) or phospho-Glu-tRNA(Gln). The polypeptide is Aspartyl/glutamyl-tRNA(Asn/Gln) amidotransferase subunit B (Picosynechococcus sp. (strain ATCC 27264 / PCC 7002 / PR-6) (Agmenellum quadruplicatum)).